The primary structure comprises 174 residues: Shikimate kinase 2 (174 aa).

12–17 (GAGKTT) is an ATP binding site. Mg(2+) is bound by residues Thr-16 and Asp-32. 3 residues coordinate substrate: Asp-34, Arg-58, and Gly-79. The segment at 112–126 (AEDPEEAQRPSLTGK) is LID domain. Arg-120 provides a ligand contact to ATP. Position 139 (Arg-139) interacts with substrate. Gln-155 serves as a coordination point for ATP.

This sequence belongs to the shikimate kinase family. AroL subfamily. Monomer. Requires Mg(2+) as cofactor.

The protein resides in the cytoplasm. The enzyme catalyses shikimate + ATP = 3-phosphoshikimate + ADP + H(+). Its pathway is metabolic intermediate biosynthesis; chorismate biosynthesis; chorismate from D-erythrose 4-phosphate and phosphoenolpyruvate: step 5/7. In terms of biological role, catalyzes the specific phosphorylation of the 3-hydroxyl group of shikimic acid using ATP as a cosubstrate. The chain is Shikimate kinase 2 from Yersinia pseudotuberculosis serotype IB (strain PB1/+).